The sequence spans 269 residues: Lysyl endopeptidase (269 aa).

Disulfide bonds link Cys-6/Cys-216, Cys-12/Cys-80, and Cys-36/Cys-58. Catalysis depends on charge relay system residues His-57, Asp-113, and Ser-194.

Belongs to the peptidase S1 family.

It is found in the secreted. The enzyme catalyses Preferential cleavage: Lys-|-Xaa, including Lys-|-Pro.. In terms of biological role, highly specific endopeptidase that hydrolyzes lysyl bonds including the Lys-Pro bond. The chain is Lysyl endopeptidase from Lysobacter enzymogenes.